A 471-amino-acid polypeptide reads, in one-letter code: 3-isopropylmalate dehydratase large subunit (471 aa).

Positions 347, 407, and 410 each coordinate [4Fe-4S] cluster.

This sequence belongs to the aconitase/IPM isomerase family. LeuC type 1 subfamily. Heterodimer of LeuC and LeuD. The cofactor is [4Fe-4S] cluster.

The catalysed reaction is (2R,3S)-3-isopropylmalate = (2S)-2-isopropylmalate. It functions in the pathway amino-acid biosynthesis; L-leucine biosynthesis; L-leucine from 3-methyl-2-oxobutanoate: step 2/4. In terms of biological role, catalyzes the isomerization between 2-isopropylmalate and 3-isopropylmalate, via the formation of 2-isopropylmaleate. The sequence is that of 3-isopropylmalate dehydratase large subunit from Prochlorococcus marinus (strain MIT 9211).